A 299-amino-acid chain; its full sequence is Oxygen-dependent coproporphyrinogen-III oxidase (299 aa).

Ser-92 provides a ligand contact to substrate. A divalent metal cation is bound by residues His-96 and His-106. His-106 functions as the Proton donor in the catalytic mechanism. 108-110 contacts substrate; sequence NVR. A divalent metal cation-binding residues include His-145 and His-175. The important for dimerization stretch occupies residues 240–275; sequence YVEFNLVWDRGTLFGLQTGGRTESILMSMPPLVRWE. 258–260 contacts substrate; the sequence is GGR.

Belongs to the aerobic coproporphyrinogen-III oxidase family. Homodimer. Requires a divalent metal cation as cofactor.

Its subcellular location is the cytoplasm. The enzyme catalyses coproporphyrinogen III + O2 + 2 H(+) = protoporphyrinogen IX + 2 CO2 + 2 H2O. It functions in the pathway porphyrin-containing compound metabolism; protoporphyrin-IX biosynthesis; protoporphyrinogen-IX from coproporphyrinogen-III (O2 route): step 1/1. Functionally, involved in the heme biosynthesis. Catalyzes the aerobic oxidative decarboxylation of propionate groups of rings A and B of coproporphyrinogen-III to yield the vinyl groups in protoporphyrinogen-IX. This chain is Oxygen-dependent coproporphyrinogen-III oxidase, found in Klebsiella pneumoniae subsp. pneumoniae (strain ATCC 700721 / MGH 78578).